The chain runs to 459 residues: Phosphoenolpyruvate carboxylase (459 aa).

The protein belongs to the PEPCase type 2 family. As to quaternary structure, homotetramer. The cofactor is Mg(2+).

It catalyses the reaction oxaloacetate + phosphate = phosphoenolpyruvate + hydrogencarbonate. In terms of biological role, catalyzes the irreversible beta-carboxylation of phosphoenolpyruvate (PEP) to form oxaloacetate (OAA), a four-carbon dicarboxylic acid source for the tricarboxylic acid cycle. This Pyrobaculum calidifontis (strain DSM 21063 / JCM 11548 / VA1) protein is Phosphoenolpyruvate carboxylase.